A 356-amino-acid chain; its full sequence is Popeye domain-containing protein 1 (356 aa).

Residues Met1–Ala48 lie on the Extracellular side of the membrane. N-linked (GlcNAc...) asparagine glycosylation is found at Asn2 and Asn30. A helical membrane pass occupies residues Asn49 to Leu69. A topological domain (cytoplasmic) is located at residue Arg70. The chain crosses the membrane as a helical span at residues Val71 to Leu91. Asp92 is a topological domain (extracellular). The helical transmembrane segment at Met93–Tyr113 threads the bilayer. Residues Met93–Lys115 are required for interaction with CAV3. At Lys114–Pro356 the chain is on the cytoplasmic side. The interval Arg136 to Arg186 is required for interaction with KCNK2. Phosphoserine occurs at positions 295 and 318. Residues Ser313–Ser323 are compositionally biased toward low complexity. The disordered stretch occupies residues Ser313–Pro356.

Belongs to the popeye family. In terms of assembly, homodimer. Homodimerization requires the C-terminus cytoplasmic region. Interacts (via the C-terminus cytoplasmic tail) with TJP1. Interacts (via the C-terminus cytoplasmic tail) with ARHGEF25/GEFT (via the DH domain). Interacts (via the C-terminus cytoplasmic tail) with VAMP3. Interacts with KCNK2; the interaction enhances KCNK2 surface expression and is inhibited by cAMP. Interacts with CAV3. Strongly expressed in heart and skeletal muscle. Weakly expressed in brain, spleen, liver, kidney and lung.

It is found in the lateral cell membrane. The protein localises to the cell junction. The protein resides in the tight junction. Its subcellular location is the membrane. It localises to the cell membrane. It is found in the sarcolemma. The protein localises to the caveola. Cell adhesion molecule involved in the establishment and/or maintenance of cell integrity. Involved in the formation and regulation of the tight junction (TJ) paracellular permeability barrier in epithelial cells. Plays a role in VAMP3-mediated vesicular transport and recycling of different receptor molecules through its interaction with VAMP3. Plays a role in the regulation of cell shape and movement by modulating the Rho-family GTPase activity through its interaction with ARHGEF25/GEFT. Induces primordial adhesive contact and aggregation of epithelial cells in a Ca(2+)-independent manner. Important for skeletal muscle and heart development. Also involved in striated muscle regeneration and repair and in the regulation of cell spreading. Important for the maintenance of cardiac function. Plays a regulatory function in heart rate dynamics mediated, at least in part, through cAMP-binding and, probably, by increasing cell surface expression of the potassium channel KCNK2 and enhancing current density. Is a caveolae-associated protein important for the preservation of caveolae structural and functional integrity as well as for heart protection against ischemia injury. The polypeptide is Popeye domain-containing protein 1 (Popdc1) (Rattus norvegicus (Rat)).